The primary structure comprises 146 residues: Putative esterase DR_2321 (146 aa).

Belongs to the thioesterase PaaI family.

The sequence is that of Putative esterase DR_2321 from Deinococcus radiodurans (strain ATCC 13939 / DSM 20539 / JCM 16871 / CCUG 27074 / LMG 4051 / NBRC 15346 / NCIMB 9279 / VKM B-1422 / R1).